The chain runs to 652 residues: DNA ligase (652 aa).

NAD(+) is bound by residues 29–33 (DSEYD), 78–79 (SL), and E107. The active-site N6-AMP-lysine intermediate is K109. R130, E164, K278, and K302 together coordinate NAD(+). The Zn(2+) site is built by C395, C398, C413, and C418. One can recognise a BRCT domain in the interval 577 to 652 (AADAALSGMT…IRDEDWLDSL (76 aa)).

Belongs to the NAD-dependent DNA ligase family. LigA subfamily. Mg(2+) serves as cofactor. Requires Mn(2+) as cofactor.

It carries out the reaction NAD(+) + (deoxyribonucleotide)n-3'-hydroxyl + 5'-phospho-(deoxyribonucleotide)m = (deoxyribonucleotide)n+m + AMP + beta-nicotinamide D-nucleotide.. DNA ligase that catalyzes the formation of phosphodiester linkages between 5'-phosphoryl and 3'-hydroxyl groups in double-stranded DNA using NAD as a coenzyme and as the energy source for the reaction. It is essential for DNA replication and repair of damaged DNA. This is DNA ligase from Streptococcus sanguinis (strain SK36).